The following is a 973-amino-acid chain: ATP-dependent DNA helicase Q5 (973 aa).

The Helicase ATP-binding domain occupies 39–213 (MAVVKGDKDV…FAALHLKQPV (175 aa)). Position 52–59 (52–59 (MPTGAGKS)) interacts with ATP. A DEAH box motif is present at residues 157-160 (DEAH). In terms of domain architecture, Helicase C-terminal spans 241-398 (NLRDFCLKAL…NKPSDKATLL (158 aa)). Zn(2+) contacts are provided by cysteine 412, cysteine 428, cysteine 432, and cysteine 435. 2 positions are modified to phosphoserine: serine 489 and serine 492. The interaction with POLR2A stretch occupies residues 491 to 621 (GSGDEGRDEA…ASKDGQLYDM (131 aa)). Disordered regions lie at residues 518-538 (GKEA…LRDA), 679-795 (TEKL…VPGK), and 822-884 (CSLE…AREP). A Phosphothreonine modification is found at threonine 527. Residues 653 to 726 (PKRVGAGFSK…APGSRTNCGD (74 aa)) form an interaction with RAD51 region. A Phosphoserine; by CDK1 modification is found at serine 728. Residues 840 to 856 (TQAEKRPRPQQESQEKR) show a composition bias toward basic and acidic residues. The span at 863–878 (PSTNSSALASDPSTEN) shows a compositional bias: polar residues.

Belongs to the helicase family. RecQ subfamily. As to quaternary structure, monomer. Interacts with TOP2A, TOP3A and TOP3B. Interacts with RNA polymerase II subunit POLR2A. Identified in a complex with the RNA polymerase II core bound to DNA. Interacts with RAD51. Interacts with WRN; this interaction stimulates WRN helicase activity on DNA fork duplexes. Interacts with MUS1; this interaction promotes MUS81-dependent mitotic DNA synthesis. Zn(2+) serves as cofactor. Post-translationally, phosphorylated by CDK1 at Ser-728; this phosphorylation is required for RECQL5-mediated disruption of RAD51 filaments on stalled replication forks.

It is found in the nucleus. Its subcellular location is the nucleoplasm. It catalyses the reaction Couples ATP hydrolysis with the unwinding of duplex DNA by translocating in the 3'-5' direction.. It carries out the reaction ATP + H2O = ADP + phosphate + H(+). DNA helicase that plays an important role in DNA replication, transcription and repair. Binds to the RNA polymerase II subunit POLR2A during transcription elongation and suppresses transcription-associated genomic instability. Also associates with POLR1A and enforces the stability of ribosomal DNA arrays. Plays an important role in mitotic chromosome separation after cross-over events and cell cycle progress. Mechanistically, removes RAD51 filaments protecting stalled replication forks at common fragile sites and stimulates MUS81-EME1 endonuclease leading to mitotic DNA synthesis. Required for efficient DNA repair, including repair of inter-strand cross-links. Stimulates DNA decatenation mediated by TOP2A. Prevents sister chromatid exchange and homologous recombination. This Rattus norvegicus (Rat) protein is ATP-dependent DNA helicase Q5 (Recql5).